Consider the following 101-residue polypeptide: MAKQSMKAREVVRVKLADKYRAKREELKAIISSVNSSDEDRWNAVLKLQSLPRDSSPSRQRKRCRQTGRPHGYVGKFGLSRIKLREAAMRGEVPGLKKASW.

The interval 50–70 (SLPRDSSPSRQRKRCRQTGRP) is disordered. The segment covering 59-68 (RQRKRCRQTG) has biased composition (basic residues).

The protein belongs to the universal ribosomal protein uS14 family. Part of the 30S ribosomal subunit. Contacts proteins S3 and S10.

Functionally, binds 16S rRNA, required for the assembly of 30S particles and may also be responsible for determining the conformation of the 16S rRNA at the A site. This Erwinia tasmaniensis (strain DSM 17950 / CFBP 7177 / CIP 109463 / NCPPB 4357 / Et1/99) protein is Small ribosomal subunit protein uS14.